Here is a 206-residue protein sequence, read N- to C-terminus: Somatotropin (206 aa).

The signal sequence occupies residues 1 to 18 (MLDRVVVLLSVLCLGVSS). At glutamine 19 the chain carries Pyrrolidone carboxylic acid. Residue histidine 37 coordinates Zn(2+). Cysteine 70 and cysteine 179 are joined by a disulfide. Residue glutamate 188 participates in Zn(2+) binding. Cysteine 196 and cysteine 204 are disulfide-bonded.

Belongs to the somatotropin/prolactin family.

It localises to the secreted. Functionally, growth hormone plays an important role in growth control and is involved in the regulation of several anabolic processes. Implicated as an osmoregulatory substance important for seawater adaptation. The chain is Somatotropin (gh) from Pseudocaranx dentex (White trevally).